The sequence spans 406 residues: Tyrosine--tRNA ligase (406 aa).

Tyr-35 is a binding site for L-tyrosine. The 'HIGH' region motif lies at 40-49 (PTGPSLHIGH). L-tyrosine is bound by residues Tyr-168 and Gln-172. The 'KMSKS' region signature appears at 228–232 (KMGKS). ATP is bound at residue Lys-231. In terms of domain architecture, S4 RNA-binding spans 339–405 (IGIIDLFAEA…GKKRFMRIIF (67 aa)).

The protein belongs to the class-I aminoacyl-tRNA synthetase family. TyrS type 1 subfamily. In terms of assembly, homodimer.

It localises to the cytoplasm. It carries out the reaction tRNA(Tyr) + L-tyrosine + ATP = L-tyrosyl-tRNA(Tyr) + AMP + diphosphate + H(+). Its function is as follows. Catalyzes the attachment of tyrosine to tRNA(Tyr) in a two-step reaction: tyrosine is first activated by ATP to form Tyr-AMP and then transferred to the acceptor end of tRNA(Tyr). The chain is Tyrosine--tRNA ligase from Treponema denticola (strain ATCC 35405 / DSM 14222 / CIP 103919 / JCM 8153 / KCTC 15104).